We begin with the raw amino-acid sequence, 208 residues long: MFTGLVEAIGVVKDVQGTIDNGFAMKIEAPQILDDCHTGDSIAVNGTCLTVTDFDRYHFTVGIAPESLRLTNLGQCKAGDPVNLERAVLSSTRMGGHFVQGHVDTVAEIVEKKQDGEAIDFTFRPRDPFVLKYIVYKGYIALDGTSLTITHVDDSTFSIMMISYTQSKVIMAKKNVGDLVNVEVDQIGKYTEKLVEAHIADWIKKTQA.

2 Lumazine-binding repeats span residues 1–97 (MFTG…MGGH) and 98–195 (FVQG…EKLV). 2,4-dihydroxypteridine is bound by residues 4 to 6 (GLV), 48 to 50 (CLT), 62 to 67 (GIAPES), 101 to 103 (GHV), K137, 146 to 148 (SLT), and 160 to 165 (MMISYT).

Homotrimer.

The enzyme catalyses 2 6,7-dimethyl-8-(1-D-ribityl)lumazine + H(+) = 5-amino-6-(D-ribitylamino)uracil + riboflavin. The protein operates within cofactor biosynthesis; riboflavin biosynthesis; riboflavin from 2-hydroxy-3-oxobutyl phosphate and 5-amino-6-(D-ribitylamino)uracil: step 2/2. Functionally, catalyzes the dismutation of two molecules of 6,7-dimethyl-8-ribityllumazine, resulting in the formation of riboflavin and 5-amino-6-(D-ribitylamino)uracil. The sequence is that of Riboflavin synthase (rib5) from Schizosaccharomyces pombe (strain 972 / ATCC 24843) (Fission yeast).